Reading from the N-terminus, the 410-residue chain is F-box/WD-40 repeat-containing protein 1 (410 aa).

The 48-residue stretch at 32-79 (SKECSLLPFELFEEILCRVPTKSLLRLKLTCKRWLALFNDKRFIYKHL) folds into the F-box domain. WD repeat units lie at residues 109–150 (PNKF…VRWI) and 269–309 (DVHN…NGVS).

The polypeptide is F-box/WD-40 repeat-containing protein 1 (FBW1) (Arabidopsis thaliana (Mouse-ear cress)).